Consider the following 1249-residue polypeptide: Clustered mitochondria protein homolog (1249 aa).

Residues 1 to 34 (MAQTNGELEHSKAETPEQLTNGNHPEETQEEEQN) form a disordered region. The region spanning 321–565 (DITRSQENYL…RVTPLDVMWQ (245 aa)) is the Clu domain. Disordered regions lie at residues 610–638 (VETA…EALD) and 874–907 (VPAT…PEKP). A compositionally biased stretch (basic and acidic residues) spans 613-638 (ASKEKSEENAESKEEGSEEKSEEALD). TPR repeat units follow at residues 975–1008 (AKLY…TERT), 1017–1050 (ILSY…WKII), and 1059–1092 (ITTM…CESL). Polar residues predominate over residues 1178-1191 (TRTLGTKVQPQVGQ). A disordered region spans residues 1178-1249 (TRTLGTKVQP…KLRGSKKSSA (72 aa)). A compositionally biased stretch (low complexity) spans 1192-1205 (SAPSASGASSANPS).

This sequence belongs to the CLU family. In terms of assembly, may associate with the eukaryotic translation initiation factor 3 (eIF-3) complex.

Its subcellular location is the cytoplasm. MRNA-binding protein involved in proper cytoplasmic distribution of mitochondria. This Aspergillus oryzae (strain ATCC 42149 / RIB 40) (Yellow koji mold) protein is Clustered mitochondria protein homolog.